The sequence spans 267 residues: Tryptophan synthase alpha chain (267 aa).

Residues Glu47 and Asp58 each act as proton acceptor in the active site.

This sequence belongs to the TrpA family. In terms of assembly, tetramer of two alpha and two beta chains.

It carries out the reaction (1S,2R)-1-C-(indol-3-yl)glycerol 3-phosphate + L-serine = D-glyceraldehyde 3-phosphate + L-tryptophan + H2O. It participates in amino-acid biosynthesis; L-tryptophan biosynthesis; L-tryptophan from chorismate: step 5/5. Its function is as follows. The alpha subunit is responsible for the aldol cleavage of indoleglycerol phosphate to indole and glyceraldehyde 3-phosphate. The protein is Tryptophan synthase alpha chain of Chlorobaculum parvum (strain DSM 263 / NCIMB 8327) (Chlorobium vibrioforme subsp. thiosulfatophilum).